The chain runs to 706 residues: Envelope glycoprotein H (706 aa).

An N-terminal signal peptide occupies residues 1–18 (MQLLCVFCLVLLWEVGAA). Residues 19–682 (SLSEVKLHLD…LYEERAHVVL (664 aa)) lie on the Virion surface side of the membrane. Asn-60 is a glycosylation site (N-linked (GlcNAc...) asparagine; by host). The interaction with gL stretch occupies residues 165–229 (DKFQYTGAMT…QSGDYSLVIV (65 aa)). Residues Cys-278 and Cys-335 are joined by a disulfide bond. N-linked (GlcNAc...) asparagine; by host glycosylation is present at Asn-435. 2 disulfides stabilise this stretch: Cys-454–Cys-478 and Cys-534–Cys-587. Asn-549 and Asn-604 each carry an N-linked (GlcNAc...) asparagine; by host glycan. Cys-612 and Cys-615 form a disulfide bridge. N-linked (GlcNAc...) asparagine; by host glycosylation is present at Asn-664. A helical membrane pass occupies residues 683–703 (AIILYFIAFALGIFLVHKIVM). At 704–706 (FFL) the chain is on the intravirion side.

It belongs to the herpesviridae glycoprotein H family. In terms of assembly, interacts with glycoprotein L (gL); this interaction is necessary for the correct processing and cell surface expression of gH. The heterodimer gH/gL seems to interact with gB trimers during fusion. The heterodimer gH/gL interacts with host EPHA2 to facilitate virus internalization and fusion. Interacts with glycoprotein 42/BZLF2. Post-translationally, N-glycosylated, O-glycosylated, and sialylated.

The protein resides in the virion membrane. The protein localises to the host cell membrane. It localises to the host endosome membrane. The heterodimer glycoprotein H-glycoprotein L is required for the fusion of viral and plasma membranes leading to virus entry into the host cell. Following initial binding to host receptor, membrane fusion is mediated by the fusion machinery composed of gB and the heterodimer gH/gL. May also be involved in the fusion between the virion envelope and the outer nuclear membrane during virion morphogenesis. The heterodimer gH/gL targets also host EPHA2 to promote viral entry. This chain is Envelope glycoprotein H, found in Homo sapiens (Human).